A 247-amino-acid chain; its full sequence is UPF0280 protein MmarC6_1437 (247 aa).

The protein belongs to the UPF0280 family.

This chain is UPF0280 protein MmarC6_1437, found in Methanococcus maripaludis (strain C6 / ATCC BAA-1332).